The primary structure comprises 280 residues: UPF0273 protein SSO1861 (280 aa).

A KaiC domain is found at 2-246 (KRVKTYIPGL…YLKISNWSVS (245 aa)). 29–36 (GGPGTGKS) serves as a coordination point for ATP.

Belongs to the UPF0273 family.

The sequence is that of UPF0273 protein SSO1861 from Saccharolobus solfataricus (strain ATCC 35092 / DSM 1617 / JCM 11322 / P2) (Sulfolobus solfataricus).